The sequence spans 566 residues: Arginine--tRNA ligase (566 aa).

The 'HIGH' region motif lies at 124–134 (ANPNGPLHIGH).

The protein belongs to the class-I aminoacyl-tRNA synthetase family.

The protein resides in the cytoplasm. It catalyses the reaction tRNA(Arg) + L-arginine + ATP = L-arginyl-tRNA(Arg) + AMP + diphosphate. The protein is Arginine--tRNA ligase (argS) of Methanocaldococcus jannaschii (strain ATCC 43067 / DSM 2661 / JAL-1 / JCM 10045 / NBRC 100440) (Methanococcus jannaschii).